The chain runs to 92 residues: Small ribosomal subunit protein uS19 (92 aa).

Belongs to the universal ribosomal protein uS19 family.

In terms of biological role, protein S19 forms a complex with S13 that binds strongly to the 16S ribosomal RNA. This Orientia tsutsugamushi (strain Boryong) (Rickettsia tsutsugamushi) protein is Small ribosomal subunit protein uS19.